Reading from the N-terminus, the 618-residue chain is Arginine--tRNA ligase (618 aa).

Residues 113-123 carry the 'HIGH' region motif; sequence ANPIHPLHIGH.

It belongs to the class-I aminoacyl-tRNA synthetase family.

Its subcellular location is the cytoplasm. The catalysed reaction is tRNA(Arg) + L-arginine + ATP = L-arginyl-tRNA(Arg) + AMP + diphosphate. The polypeptide is Arginine--tRNA ligase (Sulfolobus acidocaldarius (strain ATCC 33909 / DSM 639 / JCM 8929 / NBRC 15157 / NCIMB 11770)).